The sequence spans 385 residues: Arginine biosynthesis bifunctional protein ArgJ (385 aa).

Substrate contacts are provided by T142, K168, T179, E259, N380, and T385. Catalysis depends on T179, which acts as the Nucleophile.

The protein belongs to the ArgJ family. Heterotetramer of two alpha and two beta chains.

The protein localises to the cytoplasm. It catalyses the reaction N(2)-acetyl-L-ornithine + L-glutamate = N-acetyl-L-glutamate + L-ornithine. The catalysed reaction is L-glutamate + acetyl-CoA = N-acetyl-L-glutamate + CoA + H(+). Its pathway is amino-acid biosynthesis; L-arginine biosynthesis; L-ornithine and N-acetyl-L-glutamate from L-glutamate and N(2)-acetyl-L-ornithine (cyclic): step 1/1. The protein operates within amino-acid biosynthesis; L-arginine biosynthesis; N(2)-acetyl-L-ornithine from L-glutamate: step 1/4. Functionally, catalyzes two activities which are involved in the cyclic version of arginine biosynthesis: the synthesis of N-acetylglutamate from glutamate and acetyl-CoA as the acetyl donor, and of ornithine by transacetylation between N(2)-acetylornithine and glutamate. The polypeptide is Arginine biosynthesis bifunctional protein ArgJ (Leptospira interrogans serogroup Icterohaemorrhagiae serovar copenhageni (strain Fiocruz L1-130)).